The sequence spans 273 residues: Putative phosphoenolpyruvate synthase regulatory protein (273 aa).

An ADP-binding site is contributed by 153-160 (AVSRAGKT).

It belongs to the pyruvate, phosphate/water dikinase regulatory protein family. PSRP subfamily.

It carries out the reaction [pyruvate, water dikinase] + ADP = [pyruvate, water dikinase]-phosphate + AMP + H(+). It catalyses the reaction [pyruvate, water dikinase]-phosphate + phosphate + H(+) = [pyruvate, water dikinase] + diphosphate. In terms of biological role, bifunctional serine/threonine kinase and phosphorylase involved in the regulation of the phosphoenolpyruvate synthase (PEPS) by catalyzing its phosphorylation/dephosphorylation. The polypeptide is Putative phosphoenolpyruvate synthase regulatory protein (Xanthomonas oryzae pv. oryzae (strain MAFF 311018)).